The following is a 2289-amino-acid chain: MKGHQFKSWIFELREIVREIKNSHYFLDSWTQFNSVGSFIHIFFHQERFRKLLDPRIWSILLSRNSQGSTSNRYFTIKSVVLFVVAALLYRINNRNMVESKNLYLKGLLPIPMNSIGPRNDTSEESFGSSNINRLILSLLYLTKGKKISESSFRDPKESTWVLPITQKCIMPESNWSSRWWRNWIGKKRDFCCKISNETVAGIDISFKEKDIKYLEFLFVYYMDDPIRKGHDWELFDRLSPSKRRNIINLNSGQLFEILVKDWICYLMFAFREKIPIEVEGFFKQQGAGSTIQSNDIEHVSHLFSRNKWAISLQNCAQFNMWQFHQDLFVSWGKNPHESDFLRKISRENWIWLDNVWLVNKDRFFSKVRNVSSNIQYDSTRSSFVQVTDSSQLKGSSDQFIDHFDSISNEDSEYHTLINQREIQQLKERSILWDPSFIQTEGREIESDRFPKYLSGYSSMPRLFTEREKRMNNHLLPEESEEFIGNPTRPIRSFFSDRWSELHLGSNPTERSTRDQKLLKKEQDVSFVPSRRSENKEIVNIFKIITYLQNNVSIHPISSDLGCDMVPKDELDMDSSNKISFLNKNPFFDLFHLFHERKRGGYTLRHDFESEERFQEMADLFTLSITEPDLVYHKGFAFSIDSYGLDQRQFLKEVFNSRDESKKKSLLVLPPIFYEENESFYRRIRQNWVRISCGNDLEDPKQKRVVFASNNIMEAVNQYRLIRNLIQIQFQYSPYGYIRNVLNRFFLMKRPDRNFEYGIQRDQIGNDTLNHRTIMKDTINQHLSNLKKSQKKGFDPLIFLSRTERSINRDPNAYRYKWSNGSKNFQEHLEHFVSERKSRFQVVFDRLCINQYSIDWSEVIDQKDLSKSLRFFLSKLLRFFLSKLLLFLSNSLPFFFVSFENIPIHRSEIHIYELKGPNDQLCNQLLESIGLQIVHLKKLKPFLLDDHNTSQKSKFLINGGTISPFLFNKIPKWMIDSFHTRKNRRKSFDNTDSYFSMVSHDQDNWLNPVKPFQRSSLISSFSKANRLRFLNNPHHFCFYCNKRFPFYVEKARLNNYDFTYGQFLTILFIRNKIFSSCGGKKKHAFLERDTISPSPIESQVSNIFISKDFPQSGDERYNLYKSFHFPIRSDPLVRRAIYSIADISGTPLIEGQRVNFERTYCQTLSDMNLSDSEEKSLHQYLNFNSNMGLIHTPCSEKYLPSEKRKKWSLCLKKCVDKGQMDRTFQRDSAFSTLSKWNLFQTYMPWFFTSTGYKYLNLIFLDTFSDLLRILSSSPKFVSIFHDIMHGLDISWRILQKKWCLPQRNLISEISSKSLHNLLLSEEMIHRNNESSLISTHLRSPNVREVLYSILFLLLVAGYIVRTHLLFVSRAYSELQTEFEKIKSLMIPSYMIELRKLLDRYPTSELNSFWLKNLFLVALEQLGDCLEEIRGSGGNMLWGGDPAYGVKSIRSKKKDLNINFIDIIDLISIIPNPINRITFSRNTRHLSHTSKEIYSLIRKRKNVSGDWIDDKIESWVANSDSIDDKEREFLVQFSTLRAEKRIDQILLSLTHSDHLSKNESGYQMIEQPGTIYLRYLVDIHKKYLMNYEFNTSCLAERRIFLAHYQTITYSQTSCGANSFHFPSHGKPFSLRLALSPSRSILVIGSIGTGRSYLVKYLATTSYVPFITVFLNKFLDNKPKGFFIDDIDIDDSDDIDASNDIDRELDTELELLTMMNALTMDMMSEIDRFYITLQFELAKAMSPCIIWIPNIHDLDVNESNYLALGLLVNSLSRDCERCSTRNILVIASTHIPQKVDPALIAPNKLNTCIKIRRLLIPQQRKHFFTLSYTRGFHLEKKMFHTNGFESITMGSSARDLVALTNEALSISITQKKSIIDTNTIRSALHRQTWDLRSQVRSVQDHGILFYQIGRAVAQNVLISNCPIDPISIYMKKKSCNEGDSYLYKWYFELGTSMKKFTILLYLLSCSAGSVTQDLWSLPGPDEKNRITSYGFVENDSDLVHGLLEVQGALVGSSRTEKDCSQFDNDRVTLLFRSEPRNPLYMMQNGSCSIVDQRFLYEKYESEFEEGEGEGVLDPQQIEEDLFNHIVWAPRIWRPRGFLFDCIERPNELGFPYLAGSFRGKRIIYDEKYELQENDSEFLQSGTMQYQRRDRSSKEQGFFRISQFIWDPADPLFFLFKDQPFVSVFSHREFFADEEMSKGLFTSQTDPPTSIYKRWFIKNTQEKHFELLIQRQRWLRTNSSLSNGFFRSNTLSESYQYLSNLFLSNGTLLDRMTKTLLKKRWLFPDEMKIGFM.

Position 1643-1650 (1643-1650 (GSIGTGRS)) interacts with ATP.

Belongs to the Ycf2 family.

It is found in the plastid. The protein localises to the chloroplast stroma. Probable ATPase of unknown function. Its presence in a non-photosynthetic plant (Epifagus virginiana) and experiments in tobacco indicate that it has an essential function which is probably not related to photosynthesis. The chain is Protein Ycf2 from Aethionema grandiflorum (Persian stone-cress).